Consider the following 229-residue polypeptide: Prolactin (229 aa).

The N-terminal stretch at 1–30 (MDNKGWSLKGSLLFLLLLLSDLLLCKSVAS) is a signal peptide. An intrachain disulfide couples Cys-34 to Cys-41. A Phosphoserine modification is found at Ser-56. Asn-61 carries an N-linked (GlcNAc...) asparagine glycan. A phosphoserine mark is found at Ser-64 and Ser-120. Cystine bridges form between Cys-88-Cys-204 and Cys-221-Cys-229.

The protein belongs to the somatotropin/prolactin family. In terms of assembly, interacts with PRLR.

Its subcellular location is the secreted. Prolactin acts primarily on the mammary gland by promoting lactation. This is Prolactin (PRL) from Felis catus (Cat).